The following is a 218-amino-acid chain: Imidazole glycerol phosphate synthase subunit HisH (218 aa).

The region spanning 5-213 (RLAVIDYEAG…VEFVARCSPL (209 aa)) is the Glutamine amidotransferase type-1 domain. The active-site Nucleophile is Cys83. Catalysis depends on residues His188 and Glu190.

In terms of assembly, heterodimer of HisH and HisF.

Its subcellular location is the cytoplasm. The catalysed reaction is 5-[(5-phospho-1-deoxy-D-ribulos-1-ylimino)methylamino]-1-(5-phospho-beta-D-ribosyl)imidazole-4-carboxamide + L-glutamine = D-erythro-1-(imidazol-4-yl)glycerol 3-phosphate + 5-amino-1-(5-phospho-beta-D-ribosyl)imidazole-4-carboxamide + L-glutamate + H(+). It carries out the reaction L-glutamine + H2O = L-glutamate + NH4(+). It participates in amino-acid biosynthesis; L-histidine biosynthesis; L-histidine from 5-phospho-alpha-D-ribose 1-diphosphate: step 5/9. Its function is as follows. IGPS catalyzes the conversion of PRFAR and glutamine to IGP, AICAR and glutamate. The HisH subunit catalyzes the hydrolysis of glutamine to glutamate and ammonia as part of the synthesis of IGP and AICAR. The resulting ammonia molecule is channeled to the active site of HisF. The polypeptide is Imidazole glycerol phosphate synthase subunit HisH (Synechococcus sp. (strain JA-2-3B'a(2-13)) (Cyanobacteria bacterium Yellowstone B-Prime)).